The sequence spans 368 residues: Peptide chain release factor 2 (368 aa).

An N5-methylglutamine modification is found at Gln250.

It belongs to the prokaryotic/mitochondrial release factor family. Post-translationally, methylated by PrmC. Methylation increases the termination efficiency of RF2.

The protein resides in the cytoplasm. Peptide chain release factor 2 directs the termination of translation in response to the peptide chain termination codons UGA and UAA. This is Peptide chain release factor 2 from Mycolicibacterium vanbaalenii (strain DSM 7251 / JCM 13017 / BCRC 16820 / KCTC 9966 / NRRL B-24157 / PYR-1) (Mycobacterium vanbaalenii).